The primary structure comprises 156 residues: Small ribosomal subunit protein uS7 (156 aa).

This sequence belongs to the universal ribosomal protein uS7 family. In terms of assembly, part of the 30S ribosomal subunit. Contacts proteins S9 and S11.

One of the primary rRNA binding proteins, it binds directly to 16S rRNA where it nucleates assembly of the head domain of the 30S subunit. Is located at the subunit interface close to the decoding center, probably blocks exit of the E-site tRNA. The sequence is that of Small ribosomal subunit protein uS7 from Brachyspira hyodysenteriae (strain ATCC 49526 / WA1).